Consider the following 166-residue polypeptide: Peptide deformylase (166 aa).

Fe cation contacts are provided by Cys-88 and His-130. Glu-131 is an active-site residue. His-134 serves as a coordination point for Fe cation.

Belongs to the polypeptide deformylase family. Fe(2+) is required as a cofactor.

It catalyses the reaction N-terminal N-formyl-L-methionyl-[peptide] + H2O = N-terminal L-methionyl-[peptide] + formate. Its function is as follows. Removes the formyl group from the N-terminal Met of newly synthesized proteins. Requires at least a dipeptide for an efficient rate of reaction. N-terminal L-methionine is a prerequisite for activity but the enzyme has broad specificity at other positions. The sequence is that of Peptide deformylase from Thermoanaerobacter sp. (strain X514).